A 316-amino-acid polypeptide reads, in one-letter code: Ribosomal RNA large subunit methyltransferase F (316 aa).

Residues 200-222 (EEANKSTSRKVSNLNPKEKKNTN) are disordered. Residues 204–214 (KSTSRKVSNLN) are compositionally biased toward polar residues.

It belongs to the methyltransferase superfamily. METTL16/RlmF family.

It localises to the cytoplasm. It carries out the reaction adenosine(1618) in 23S rRNA + S-adenosyl-L-methionine = N(6)-methyladenosine(1618) in 23S rRNA + S-adenosyl-L-homocysteine + H(+). Its function is as follows. Specifically methylates the adenine in position 1618 of 23S rRNA. The polypeptide is Ribosomal RNA large subunit methyltransferase F (Flavobacterium johnsoniae (strain ATCC 17061 / DSM 2064 / JCM 8514 / BCRC 14874 / CCUG 350202 / NBRC 14942 / NCIMB 11054 / UW101) (Cytophaga johnsonae)).